Here is a 477-residue protein sequence, read N- to C-terminus: Aspartyl/glutamyl-tRNA(Asn/Gln) amidotransferase subunit B (477 aa).

Belongs to the GatB/GatE family. GatB subfamily. Heterotrimer of A, B and C subunits.

The enzyme catalyses L-glutamyl-tRNA(Gln) + L-glutamine + ATP + H2O = L-glutaminyl-tRNA(Gln) + L-glutamate + ADP + phosphate + H(+). It carries out the reaction L-aspartyl-tRNA(Asn) + L-glutamine + ATP + H2O = L-asparaginyl-tRNA(Asn) + L-glutamate + ADP + phosphate + 2 H(+). Functionally, allows the formation of correctly charged Asn-tRNA(Asn) or Gln-tRNA(Gln) through the transamidation of misacylated Asp-tRNA(Asn) or Glu-tRNA(Gln) in organisms which lack either or both of asparaginyl-tRNA or glutaminyl-tRNA synthetases. The reaction takes place in the presence of glutamine and ATP through an activated phospho-Asp-tRNA(Asn) or phospho-Glu-tRNA(Gln). In Legionella pneumophila subsp. pneumophila (strain Philadelphia 1 / ATCC 33152 / DSM 7513), this protein is Aspartyl/glutamyl-tRNA(Asn/Gln) amidotransferase subunit B.